Consider the following 237-residue polypeptide: LexA repressor (237 aa).

The segment covering 1–12 has biased composition (polar residues); the sequence is MPVKDSSSNKKN. Residues 1–20 are disordered; the sequence is MPVKDSSSNKKNQIGKLSER. Residues 41-61 constitute a DNA-binding region (H-T-H motif); sequence IREIGDAAGLQSTSSVAYQLK. Residues 67-80 are compositionally biased toward basic and acidic residues; it reads GYLRRDPNKPRAVD. The segment at 67–112 is disordered; it reads GYLRRDPNKPRAVDVRALPDPIPSKPGRKPGPKKSSVAISPDPAET. Residues Ser161 and Lys198 each act as for autocatalytic cleavage activity in the active site.

Belongs to the peptidase S24 family. As to quaternary structure, homodimer.

The enzyme catalyses Hydrolysis of Ala-|-Gly bond in repressor LexA.. In terms of biological role, represses a number of genes involved in the response to DNA damage (SOS response), including recA and lexA. In the presence of single-stranded DNA, RecA interacts with LexA causing an autocatalytic cleavage which disrupts the DNA-binding part of LexA, leading to derepression of the SOS regulon and eventually DNA repair. This chain is LexA repressor, found in Corynebacterium diphtheriae (strain ATCC 700971 / NCTC 13129 / Biotype gravis).